Reading from the N-terminus, the 123-residue chain is Venom protein 29 (123 aa).

An N-terminal signal peptide occupies residues 1 to 18 (MNKLFLFTLLVTLWSVKG).

Post-translationally, contains 3 disulfide bonds. In terms of tissue distribution, expressed by the venom gland.

The protein localises to the secreted. In Lychas mucronatus (Chinese swimming scorpion), this protein is Venom protein 29.